The following is a 195-amino-acid chain: Magnetosome membrane protein 22 (195 aa).

Low complexity predominate over residues 1–28; sequence MAAQTAASEAPAPAAAPADSPTTAGPTP. The tract at residues 1–31 is disordered; sequence MAAQTAASEAPAPAAAPADSPTTAGPTPDSV. The next 3 helical transmembrane spans lie at 45–65, 90–110, and 115–135; these read VLAAVAASIVPVPLFDIAAVV, SVIASLAGGVVGYGAGMAVAV, and LIPGVGWMLGMVSLPVIAGAT.

The protein localises to the magnetosome membrane. The chain is Magnetosome membrane protein 22 from Magnetospirillum gryphiswaldense (strain DSM 6361 / JCM 21280 / NBRC 15271 / MSR-1).